Reading from the N-terminus, the 294-residue chain is Glycine-rich protein 2 (294 aa).

A signal peptide spans 1–20 (MKMWFRLATFVTLIIEFAHC). The span at 205-221 (TGSQTGAAANGTSAGAA) shows a compositional bias: low complexity. Positions 205 to 225 (TGSQTGAAANGTSAGAAVRGG) are disordered.

Nacreous layer of shell (at protein level). Expressed primarily in the mantle with highest level in the mantle pallium and lower level in the mantle edge.

The protein resides in the secreted. This chain is Glycine-rich protein 2, found in Pinctada maxima (Silver-lipped pearl oyster).